A 648-amino-acid chain; its full sequence is Chaperone protein HtpG (648 aa).

Positions 1-349 are a; substrate-binding; the sequence is MTTEHAAGAQ…SSDLPLNVSR (349 aa). The interval 350 to 570 is b; that stretch reads EILQESKDID…EHDVGMNLAR (221 aa). Residues 571–648 are c; that stretch reads ILKAAGQQAP…MAMGGSAGTD (78 aa).

Belongs to the heat shock protein 90 family. As to quaternary structure, homodimer.

The protein localises to the cytoplasm. Functionally, molecular chaperone. Has ATPase activity. In Aromatoleum aromaticum (strain DSM 19018 / LMG 30748 / EbN1) (Azoarcus sp. (strain EbN1)), this protein is Chaperone protein HtpG.